The chain runs to 437 residues: GTPase Der (437 aa).

EngA-type G domains are found at residues 4 to 168 and 178 to 353; these read NIVA…PEKP and PRFA…ENRK. GTP is bound by residues 10–17, 57–61, 120–123, 184–191, 231–235, and 296–299; these read GRPNVGKS, DTGGY, NKVD, GRPNAGKS, DTAGI, and NKWD. A KH-like domain is found at 354–437; it reads QRISTSKFNE…VPIDIYIREK (84 aa).

Belongs to the TRAFAC class TrmE-Era-EngA-EngB-Septin-like GTPase superfamily. EngA (Der) GTPase family. As to quaternary structure, associates with the 50S ribosomal subunit.

Functionally, GTPase that plays an essential role in the late steps of ribosome biogenesis. This Flavobacterium johnsoniae (strain ATCC 17061 / DSM 2064 / JCM 8514 / BCRC 14874 / CCUG 350202 / NBRC 14942 / NCIMB 11054 / UW101) (Cytophaga johnsonae) protein is GTPase Der.